The primary structure comprises 234 residues: Endonuclease NucS (234 aa).

It belongs to the NucS endonuclease family.

It localises to the cytoplasm. Functionally, cleaves both 3' and 5' ssDNA extremities of branched DNA structures. In Bifidobacterium adolescentis (strain ATCC 15703 / DSM 20083 / NCTC 11814 / E194a), this protein is Endonuclease NucS.